We begin with the raw amino-acid sequence, 183 residues long: MTYLSQIEALLFVAGEEGLSLRHLASMLSLTPTALQQQLEKLSQKYEKDQHSSLCLIETANTYRLVTKEGFAGLLRAYAKTPMNQSLSRASLEVLSIVAYKQPITRIEIDDIRGVNSSGALSKLLAFDLIREAGKKDVVGRPHLYATTDYFLDYMGINHLDELIEVSAVEPADEEIALFRTQD.

This sequence belongs to the ScpB family. As to quaternary structure, homodimer. Homodimerization may be required to stabilize the binding of ScpA to the Smc head domains. Component of a cohesin-like complex composed of ScpA, ScpB and the Smc homodimer, in which ScpA and ScpB bind to the head domain of Smc. The presence of the three proteins is required for the association of the complex with DNA.

The protein localises to the cytoplasm. Participates in chromosomal partition during cell division. May act via the formation of a condensin-like complex containing Smc and ScpA that pull DNA away from mid-cell into both cell halves. The protein is Segregation and condensation protein B of Streptococcus pyogenes serotype M12 (strain MGAS2096).